The chain runs to 361 residues: 3,6-anhydro-alpha-L-galactonate cycloisomerase (361 aa).

Lys-166 (proton acceptor) is an active-site residue. Mg(2+) contacts are provided by Asp-195, Glu-221, and Glu-247. His-297 acts as the Proton donor/acceptor in catalysis.

The protein belongs to the mandelate racemase/muconate lactonizing enzyme family. Mg(2+) is required as a cofactor.

It catalyses the reaction 3,6-anhydro-L-galactonate = 2-dehydro-3-deoxy-L-galactonate. Involved in the degradation of 3,6-anhydro-L-galactose, which is the major monomeric sugar of red macroalgae. Catalyzes the isomerization of 3,6-anhydrogalactonate (AHGA) to 2-keto-3-deoxy-galactonate (KDGal). The polypeptide is 3,6-anhydro-alpha-L-galactonate cycloisomerase (Streptomyces coelicolor (strain ATCC BAA-471 / A3(2) / M145)).